A 122-amino-acid polypeptide reads, in one-letter code: Large ribosomal subunit protein uL24 (122 aa).

It belongs to the universal ribosomal protein uL24 family. Part of the 50S ribosomal subunit.

In terms of biological role, one of two assembly initiator proteins, it binds directly to the 5'-end of the 23S rRNA, where it nucleates assembly of the 50S subunit. Its function is as follows. One of the proteins that surrounds the polypeptide exit tunnel on the outside of the subunit. This is Large ribosomal subunit protein uL24 from Trichodesmium erythraeum (strain IMS101).